The sequence spans 137 residues: Acidic phospholipase A2 1 (137 aa).

The signal sequence occupies residues 1 to 11 (LVAVCVSLLGA). Positions 12 to 19 (ANIPPQPL) are excised as a propeptide. Intrachain disulfides connect Cys-30-Cys-89, Cys-44-Cys-136, Cys-46-Cys-62, Cys-61-Cys-117, Cys-68-Cys-110, Cys-78-Cys-103, and Cys-96-Cys-108. Positions 45, 47, and 49 each coordinate Ca(2+). Positions 49 and 65 each coordinate tridecanoate. The active site involves His-65. Residue Asp-66 participates in Ca(2+) binding. Residue Asp-111 is part of the active site.

Monomer. Ca(2+) is required as a cofactor. As to expression, expressed by the venom gland.

It is found in the secreted. It carries out the reaction a 1,2-diacyl-sn-glycero-3-phosphocholine + H2O = a 1-acyl-sn-glycero-3-phosphocholine + a fatty acid + H(+). Snake venom phospholipase A2 (PLA2) that shows anticoagulant and neurotoxic activities. PLA2 catalyzes the calcium-dependent hydrolysis of the 2-acyl groups in 3-sn-phosphoglycerides. The chain is Acidic phospholipase A2 1 from Bungarus caeruleus (Indian krait).